Reading from the N-terminus, the 429-residue chain is Adenylosuccinate synthetase (429 aa).

GTP contacts are provided by residues 12-18 (GDEGKGK) and 40-42 (GHT). Aspartate 13 serves as the catalytic Proton acceptor. Residues aspartate 13 and glycine 40 each coordinate Mg(2+). IMP contacts are provided by residues 13–16 (DEGK), 38–41 (NAGH), threonine 129, arginine 143, glutamine 224, threonine 239, and arginine 303. The active-site Proton donor is histidine 41. A substrate-binding site is contributed by 299–305 (VTTGRAR). Residues arginine 305, 331 to 333 (KLD), and 413 to 415 (GVG) contribute to the GTP site.

It belongs to the adenylosuccinate synthetase family. In terms of assembly, homodimer. Requires Mg(2+) as cofactor.

It is found in the cytoplasm. It catalyses the reaction IMP + L-aspartate + GTP = N(6)-(1,2-dicarboxyethyl)-AMP + GDP + phosphate + 2 H(+). The protein operates within purine metabolism; AMP biosynthesis via de novo pathway; AMP from IMP: step 1/2. Functionally, plays an important role in the de novo pathway of purine nucleotide biosynthesis. Catalyzes the first committed step in the biosynthesis of AMP from IMP. In Rhodococcus opacus (strain B4), this protein is Adenylosuccinate synthetase.